The sequence spans 131 residues: Small ribosomal subunit protein uS8 (131 aa).

Belongs to the universal ribosomal protein uS8 family. Part of the 30S ribosomal subunit. Contacts proteins S5 and S12.

Functionally, one of the primary rRNA binding proteins, it binds directly to 16S rRNA central domain where it helps coordinate assembly of the platform of the 30S subunit. This is Small ribosomal subunit protein uS8 from Dehalococcoides mccartyi (strain CBDB1).